The sequence spans 354 residues: Kelch domain-containing protein 8B (354 aa).

Kelch repeat units lie at residues 1–31, 32–79, 81–127, 128–175, 176–222, 224–281, 282–329, and 331–354; these read MSAG…HQDG, HLLV…VLGK, VLVV…ERDG, MVYA…LHGN, KIYV…MAEG, VFSL…SLGG, HIVA…QAGP, and LFVI…RDGV.

It localises to the cytoplasm. The protein resides in the midbody. Functionally, involved in pinching off the separated nuclei at the cleavage furrow and in cytokinesis. Required for mitotic integrity and maintenance of chromosomal stability. Protects cells against mitotic errors, centrosomal amplification, micronucleus formation and aneuploidy. Plays a key role of midbody function involving abscission of the daughter cells during cytokinesis and appropriate chromosomal and nuclear segregation into the daughter cells. This chain is Kelch domain-containing protein 8B, found in Homo sapiens (Human).